Here is a 1155-residue protein sequence, read N- to C-terminus: uncharacterized protein (1155 aa).

The first 19 residues, 1-19 (MKKNIFITSLLILLLLLSS), serve as a signal peptide directing secretion. Cys20 carries the N-palmitoyl cysteine lipid modification. Cys20 carries the S-diacylglycerol cysteine lipid modification. 4 helical membrane-spanning segments follow: residues 289 to 309 (ISVS…FLIG), 395 to 415 (LGFI…FLIF), 424 to 444 (ALIT…FMLF), and 459 to 479 (ISYA…SMII).

The protein belongs to the TrbL/VirB6 family.

It is found in the cell membrane. This is an uncharacterized protein from Rickettsia prowazekii (strain Madrid E).